Here is a 1019-residue protein sequence, read N- to C-terminus: Serine/threonine-protein kinase 31 (1019 aa).

The 60-residue stretch at 78–137 (NLDPNKIYGGLFSEDQCWYRCKVLKIISVEKCLVRYIDYGNTEILNRSDIVEIPLELQFS) folds into the Tudor domain. The stretch at 298–355 (EKIKQDQKLIEENEKLKTEKDALLESYKALELKVEQIAQELQQEKAAAVDLTNHLEYT) forms a coiled coil. In terms of domain architecture, Protein kinase spans 710 to 1019 (IGLLKYMNSG…TRNGEANFDC (310 aa)). Residues 716 to 724 (MNSGGLLTM) and Lys-737 each bind ATP.

Belongs to the protein kinase superfamily. Ser/Thr protein kinase family. In terms of tissue distribution, testis specific.

It catalyses the reaction L-seryl-[protein] + ATP = O-phospho-L-seryl-[protein] + ADP + H(+). The catalysed reaction is L-threonyl-[protein] + ATP = O-phospho-L-threonyl-[protein] + ADP + H(+). The sequence is that of Serine/threonine-protein kinase 31 (STK31) from Homo sapiens (Human).